Consider the following 222-residue polypeptide: MKKHLLPLALLLSGISPAQALDVGDISSFMNSDSSTLSKTIKNSTDSGRLINIRLERLSSPLDDGQVIAMDKPDELLLTPASLLLPAQASEVIRFFYKGPADEKERYYRIVWFDQALSDAQRDNANRSAVATASARIGTILVVAPRQANYHFQYANGSLTNTGNATLRILAYGPCLKAANGKECKENYYLMPGKSRRFTRVDTADNKGRVALWQGDKFIPVK.

The first 20 residues, 1 to 20 (MKKHLLPLALLLSGISPAQA), serve as a signal peptide directing secretion.

This sequence belongs to the EcpB/EcpE family.

In terms of biological role, part of the ecpRABCDE operon, which encodes the E.coli common pilus (ECP). ECP is found in both commensal and pathogenic strains and plays a dual role in early-stage biofilm development and host cell recognition. The protein is Probable fimbrial chaperone EcpB (ecpB) of Escherichia coli O7:K1 (strain IAI39 / ExPEC).